The sequence spans 632 residues: Protein NSP-INTERACTING KINASE 3 (632 aa).

An N-terminal signal peptide occupies residues 1 to 25; it reads MEGVRFVVWRLGFLVFVWFFDISSA. The Extracellular portion of the chain corresponds to 26–238; that stretch reads TLSPTGVNYE…GTRTNGHHVA (213 aa). N-linked (GlcNAc...) asparagine glycosylation is present at N96. LRR repeat units lie at residues 97 to 121, 122 to 145, 147 to 168, and 169 to 193; these read LTYLQSVVLQNNAITGPIPETIGRL, EKLQSLDLSNNSFTGEIPASLGEL, NLNYLRLNNNSLIGTCPESLSK, and IEGLTLVDISYNNLSGSLPKVSART. Residues N131, N155, N181, and N210 are each glycosylated (N-linked (GlcNAc...) asparagine). A helical transmembrane segment spans residues 239–259; sequence LAFAASFSAAFFVFFTSGMFL. At 260–632 the chain is on the cytoplasmic side; sequence WWRYRRNKQI…VEAIELSGPR (373 aa). T298 is modified (phosphothreonine). The Protein kinase domain maps to 301 to 584; sequence FNSKNILGRG…EGDGLAERWE (284 aa). ATP is bound at residue 307 to 315; that stretch reads LGRGGYGIV. At T324 the chain carries Phosphothreonine. K329 is an ATP binding site. Phosphoserine is present on residues S382 and S385. The tract at residues 415–495 is interaction with geminivirus NSP protein; sequence YLHEQCDPKI…DVFGFGILLL (81 aa). D428 acts as the Proton acceptor in catalysis. Phosphothreonine is present on residues T461, T462, and T467. Y475 is modified (phosphotyrosine). S477 is modified (phosphoserine). T478 carries the phosphothreonine modification. S482 carries the phosphoserine modification. A Phosphothreonine modification is found at T557.

It belongs to the protein kinase superfamily. Ser/Thr protein kinase family. In terms of assembly, oligomer. Interacts with geminivirus nuclear shuttle protein (NSP). In terms of processing, autophosphorylated. As to expression, expressed in seedlings, leaves and flowers.

It is found in the cell membrane. It carries out the reaction L-seryl-[protein] + ATP = O-phospho-L-seryl-[protein] + ADP + H(+). It catalyses the reaction L-threonyl-[protein] + ATP = O-phospho-L-threonyl-[protein] + ADP + H(+). Its activity is regulated as follows. Inhibited by the viral nuclear shuttle protein (NSP) that binds to the region required for oligomerization. In terms of biological role, involved in defense response to geminivirus infection. The chain is Protein NSP-INTERACTING KINASE 3 (NIK3) from Arabidopsis thaliana (Mouse-ear cress).